The following is a 380-amino-acid chain: Cytochrome b (380 aa).

The next 4 membrane-spanning stretches (helical) occupy residues 33–53 (FGSL…FLAM), 77–98 (WTIR…FLHI), 113–133 (WNIG…GYVL), and 178–198 (FFTF…LHLL). 2 residues coordinate heme b: His-83 and His-97. Heme b contacts are provided by His-182 and His-196. His-201 serves as a coordination point for a ubiquinone. Helical transmembrane passes span 226 to 246 (IKDI…TLFS), 288 to 308 (LGGV…PILH), 320 to 340 (LSQL…WIGG), and 347 to 367 (FITI…FLMP).

Belongs to the cytochrome b family. The cytochrome bc1 complex contains 11 subunits: 3 respiratory subunits (MT-CYB, CYC1 and UQCRFS1), 2 core proteins (UQCRC1 and UQCRC2) and 6 low-molecular weight proteins (UQCRH/QCR6, UQCRB/QCR7, UQCRQ/QCR8, UQCR10/QCR9, UQCR11/QCR10 and a cleavage product of UQCRFS1). This cytochrome bc1 complex then forms a dimer. Heme b serves as cofactor.

The protein resides in the mitochondrion inner membrane. Component of the ubiquinol-cytochrome c reductase complex (complex III or cytochrome b-c1 complex) that is part of the mitochondrial respiratory chain. The b-c1 complex mediates electron transfer from ubiquinol to cytochrome c. Contributes to the generation of a proton gradient across the mitochondrial membrane that is then used for ATP synthesis. In Gorilla gorilla gorilla (Western lowland gorilla), this protein is Cytochrome b (MT-CYB).